Reading from the N-terminus, the 1118-residue chain is MGVQGFQDYIEKHCPSAVVPVELQKLARGSLVGGGRQRPPQTPLRLLVDADNCLHRLYGGFYTDWVSGGQWNHMLGYLAALAKACFGGNIELFVFFNGALEKARLHEWVKRQGNERQTAQQIVSHVQNKGTPPPKVWFLPPVCMAHCIRLALIRFHVKVAQSIEDHHQEVIGFCRENGFHGLVAYDSDYALCNIPYYFSAHALKLSRNGKSLTTSQYLMHEVAKQLDLNPNRFPIFAALLGNHILPDEDLASFHWSLLGPEHPLASLKVRAHQLVLPPCDVVIKAVADYVRNIQDTSDLDAIAKDVFQHSQSRTDDKVIRFKRAIGYYSATSKPMSFHPPHYLAARPGPFGMPGMVPPHVPPQMLNIPQTSLQAKPVAPQVPSPGGAPGQGPYPYSLSEPAPLTLDTSGKNLTEQNSYSNIPHEGKHTPLYERSSPINPAQSGSPNHVDSAYFPGSSTSSSSDNDEGSGGATNHISGNKIGWEKTGSHSEPQARGDPGDQTKAEGSSTASSGSQLAEGKGSQMGTVQPIPCLLSMPTRNHMDITTPPLPPVAPEVLRVAEHRHKKGLMYPYIFHVLTKGEIKIAVSIEDEANKDLPPAALLYRPVRQYVYGVLFSLAESRKKTERLAFRKNRLPPEFSPVIIKEWAAYKGKSPQTPELVEALAFREWTCPNLKRLWLGKAVEDKNRRMRAFLACMRSDTPAMLNPANVPTHLMVLCCVLRYMVQWPGARILRRQELDAFLAQALSPKLYEPDQLQELKIENLDPRGIQLSALFMSGVDMALFANDACGQPIPWEHCCPWMYFDGKLFQSKLLKASREKTPLIDLCDGQADQAAKVEKMRQSVLEGLSFSRQSHTLPFPPPPALPFYPASAYPRHFGPVPPSQGRGRGFAGVCGFGGPYGETVATGPYRAFRVAAASGHCGAFSGSDSSRTSKSQGGVQPIPSQGGKLEIAGTVVGHWAGSRRGRGGRGPFPLQVVSVGGPARGRPRGVISTPVIRTFGRGGRYYGRGYKNQAAIQGRPPYAASAEEVAKELKSKSGESKSSAMSSDGSLAENGVMAEEKPAPQMNGSTGDARAPSHSESALNNDSKTCNTNPHLNALSTDSACRREAALEAAVLNKEE.

The interval 339–405 (PPHYLAARPG…SLSEPAPLTL (67 aa)) is interaction with YES1, SRC and FYN. The disordered stretch occupies residues 374-533 (AKPVAPQVPS…GTVQPIPCLL (160 aa)). Residues 376 to 396 (PVAPQVPSPGGAPGQGPYPYS) show a composition bias toward low complexity. Polar residues-rich tracts occupy residues 405–420 (LDTSGKNLTEQNSYSN) and 435–447 (SPINPAQSGSPNH). Residues 481–502 (GWEKTGSHSEPQARGDPGDQTK) show a composition bias toward basic and acidic residues. Over residues 503–514 (AEGSSTASSGSQ) the composition is skewed to polar residues. T655 is subject to Phosphothreonine. The tract at residues 829–1118 (ADQAAKVEKM…LEAAVLNKEE (290 aa)) is RNA binding. Omega-N-methylarginine occurs at positions 873, 884, and 886. The disordered stretch occupies residues 921-945 (AFSGSDSSRTSKSQGGVQPIPSQGG). Residues 924–936 (GSDSSRTSKSQGG) are compositionally biased toward polar residues. N6-acetyllysine is present on K932. S960 is subject to Phosphoserine. Omega-N-methylarginine is present on residues R982 and R986. S1023 bears the Phosphoserine mark. The segment at 1025–1102 (EEVAKELKSK…HLNALSTDSA (78 aa)) is disordered. Positions 1026–1037 (EVAKELKSKSGE) are enriched in basic and acidic residues. Positions 1038 to 1051 (SKSSAMSSDGSLAE) are enriched in low complexity. Phosphoserine is present on residues S1044, S1045, and S1048. Positions 1076–1101 (HSESALNNDSKTCNTNPHLNALSTDS) are enriched in polar residues.

This sequence belongs to the constitutive coactivator of PPAR-gamma family. In terms of assembly, interacts with PURA. Interacts with SRC family protein kinases YES1, SRC and FYN. Upon tyrosine phosphorylation, interacts with PIK3R1. Interacts with IGF2BP1/IMP-1 in an RNA-dependent manner. In terms of processing, arg-982 is dimethylated, probably to asymmetric dimethylarginine. Post-translationally, phosphorylated on tyrosine by SRC family protein kinases upon oxidative stress, for instance following UV irradiation. Widely expressed. In gastric mucosa, detected in the bottom region of the foveolar epithelium (at protein level).

Its subcellular location is the cytoplasm. It localises to the cell membrane. Functionally, component of the oxidative stress-induced survival signaling. May regulate the activation of SRC family protein kinases. May act as a scaffolding protein enabling SRC family protein kinases to phosphorylate and activate PI3-kinase. Binds IGF2 RNA and promotes the production of IGF2 protein. This is Constitutive coactivator of PPAR-gamma-like protein 1 (FAM120A) from Homo sapiens (Human).